Consider the following 488-residue polypeptide: Protein nucleotidyltransferase YdiU (488 aa).

Residues glycine 91, glycine 93, arginine 94, lysine 114, aspartate 126, glycine 127, arginine 177, and arginine 184 each coordinate ATP. Residue aspartate 253 is the Proton acceptor of the active site. Positions 254 and 263 each coordinate Mg(2+). Residue aspartate 263 coordinates ATP.

It belongs to the SELO family. Mg(2+) serves as cofactor. It depends on Mn(2+) as a cofactor.

The catalysed reaction is L-seryl-[protein] + ATP = 3-O-(5'-adenylyl)-L-seryl-[protein] + diphosphate. The enzyme catalyses L-threonyl-[protein] + ATP = 3-O-(5'-adenylyl)-L-threonyl-[protein] + diphosphate. It catalyses the reaction L-tyrosyl-[protein] + ATP = O-(5'-adenylyl)-L-tyrosyl-[protein] + diphosphate. It carries out the reaction L-histidyl-[protein] + UTP = N(tele)-(5'-uridylyl)-L-histidyl-[protein] + diphosphate. The catalysed reaction is L-seryl-[protein] + UTP = O-(5'-uridylyl)-L-seryl-[protein] + diphosphate. The enzyme catalyses L-tyrosyl-[protein] + UTP = O-(5'-uridylyl)-L-tyrosyl-[protein] + diphosphate. Nucleotidyltransferase involved in the post-translational modification of proteins. It can catalyze the addition of adenosine monophosphate (AMP) or uridine monophosphate (UMP) to a protein, resulting in modifications known as AMPylation and UMPylation. In Bacillus cereus (strain ATCC 10987 / NRS 248), this protein is Protein nucleotidyltransferase YdiU.